The sequence spans 433 residues: Legumain (433 aa).

The N-terminal stretch at 1–17 (MVWKVAVFLSAALVIGA) is a signal peptide. Asparagine 91 is a glycosylation site (N-linked (GlcNAc...) asparagine). The active site involves histidine 148. Asparagine 167 is a glycosylation site (N-linked (GlcNAc...) asparagine). Cysteine 189 (nucleophile) is an active-site residue. Residues asparagine 263 and asparagine 272 are each glycosylated (N-linked (GlcNAc...) asparagine). Positions 324–433 (DLEESRQLTE…SMDHVCLGHY (110 aa)) are excised as a propeptide. 2 disulfides stabilise this stretch: cysteine 378–cysteine 412 and cysteine 390–cysteine 429.

The protein belongs to the peptidase C13 family. In terms of assembly, homodimer before autocatalytic removal of the propeptide. Monomer after autocatalytic processing. May interact with integrins. In terms of processing, activated by autocatalytic processing at pH 4.

It localises to the lysosome. It catalyses the reaction Hydrolysis of proteins and small molecule substrates at -Asn-|-Xaa- bonds.. Its function is as follows. Has a strict specificity for hydrolysis of asparaginyl bonds. Can also cleave aspartyl bonds slowly, especially under acidic conditions. Involved in the processing of proteins for MHC class II antigen presentation in the lysosomal/endosomal system. Also involved in MHC class I antigen presentation in cross-presenting dendritic cells by mediating cleavage and maturation of Perforin-2 (MPEG1), thereby promoting antigen translocation in the cytosol. Required for normal lysosomal protein degradation in renal proximal tubules. Required for normal degradation of internalized EGFR. Plays a role in the regulation of cell proliferation via its role in EGFR degradation. The protein is Legumain (LGMN) of Pongo abelii (Sumatran orangutan).